A 430-amino-acid chain; its full sequence is Serine hydroxymethyltransferase (430 aa).

120–122 provides a ligand contact to (6S)-5,6,7,8-tetrahydrofolate; the sequence is GHI. An N6-(pyridoxal phosphate)lysine modification is found at Lys226.

This sequence belongs to the SHMT family. Homodimer. Pyridoxal 5'-phosphate serves as cofactor.

The protein localises to the cytoplasm. It functions in the pathway amino-acid biosynthesis; glycine biosynthesis; glycine from L-serine: step 1/1. Catalyzes the reversible interconversion of serine and glycine with a modified folate serving as the one-carbon carrier. Also exhibits a pteridine-independent aldolase activity toward beta-hydroxyamino acids, producing glycine and aldehydes, via a retro-aldol mechanism. The polypeptide is Serine hydroxymethyltransferase (Pyrobaculum islandicum (strain DSM 4184 / JCM 9189 / GEO3)).